A 407-amino-acid chain; its full sequence is Probable peptidoglycan glycosyltransferase FtsW (407 aa).

Residues 1 to 25 (MSIDFRNIIKPYPSPIITGRGIDLD) lie on the Cytoplasmic side of the membrane. The chain crosses the membrane as a helical span at residues 26-46 (FPMLAGCLALLGLGLVMITSA). Residues 47-65 (SSEVAAVQSGNTLYMMIRH) are Periplasmic-facing. Residues 66-86 (LVYLVIGLGACIVTMMIPIAT) form a helical membrane-spanning segment. Topologically, residues 87–89 (WQR) are cytoplasmic. A helical membrane pass occupies residues 90-110 (LGWLMLIGAFGLLIMVILPGI). At 111–119 (GREVNGSMR) the chain is on the periplasmic side. The helical transmembrane segment at 120 to 140 (WIGFGAFNVQPSEIAKVFVVI) threads the bilayer. Residues 141-155 (YLAGYLVRRQKEVRE) lie on the Cytoplasmic side of the membrane. A helical membrane pass occupies residues 156–176 (SWMGFFKPFIVLLPMAGLLLM). At 177–181 (EPDFG) the chain is on the periplasmic side. Residues 182-202 (ATVVMMGAAAAMLFLGGVGLF) traverse the membrane as a helical segment. Residue arginine 203 is a topological domain, cytoplasmic. A helical transmembrane segment spans residues 204–224 (FTLMVVLAVAAVTVLVQAQPY). Residues 225 to 283 (RMARLITFTDPWSDQFGSGYQLTQALIAFGRGEWLGVGLGNSVQKQFYLPEAHTDFVFS) are Periplasmic-facing. The helical transmembrane segment at 284–304 (VLAEELGVVGSLCTVALFVFV) threads the bilayer. Residues 305 to 321 (CVRGMYIGMWAEKAKQY) lie on the Cytoplasmic side of the membrane. The chain crosses the membrane as a helical span at residues 322 to 342 (FAAYVAYGLSFLWIGQFLINI). Residues 343 to 355 (GVNVGLLPTKGLT) lie on the Periplasmic side of the membrane. A helical transmembrane segment spans residues 356-376 (LPFLSYGGSSLVICCACLGLL). Over 377–407 (LRIEWESRTHLGSEEMEFSESDFAEEPTHGR) the chain is Cytoplasmic.

Belongs to the SEDS family. FtsW subfamily.

The protein resides in the cell inner membrane. It carries out the reaction [GlcNAc-(1-&gt;4)-Mur2Ac(oyl-L-Ala-gamma-D-Glu-L-Lys-D-Ala-D-Ala)](n)-di-trans,octa-cis-undecaprenyl diphosphate + beta-D-GlcNAc-(1-&gt;4)-Mur2Ac(oyl-L-Ala-gamma-D-Glu-L-Lys-D-Ala-D-Ala)-di-trans,octa-cis-undecaprenyl diphosphate = [GlcNAc-(1-&gt;4)-Mur2Ac(oyl-L-Ala-gamma-D-Glu-L-Lys-D-Ala-D-Ala)](n+1)-di-trans,octa-cis-undecaprenyl diphosphate + di-trans,octa-cis-undecaprenyl diphosphate + H(+). The protein operates within cell wall biogenesis; peptidoglycan biosynthesis. Peptidoglycan polymerase that is essential for cell division. The polypeptide is Probable peptidoglycan glycosyltransferase FtsW (Pseudomonas fluorescens (strain SBW25)).